The following is a 1505-amino-acid chain: Anaphase-promoting complex subunit 1 (1505 aa).

The protein belongs to the APC1 family. In terms of assembly, the APC/C complex is probably composed of at least 12 subunits: apc-2, apc-10, apc-11, cdc-26, emb-1, emb-27, emb-30, mat-1, mat-2, mat-3, such-1 and gfi-3.

It participates in protein modification; protein ubiquitination. In terms of biological role, probable component of the anaphase promoting complex/cyclosome (APC/C), a cell cycle-regulated E3 ubiquitin ligase that controls progression through mitosis and the G1 phase of the cell cycle. The APC/C complex acts by mediating ubiquitination and subsequent degradation of target proteins. Developmental role in early embryogenesis and the metaphase to anaphase transition in oocyte and spermatocyte meiosis and mitosis in germ cells. Required for embryonic anterior-posterior axis formation. Plays a role in regulating the abundance of glr-1 receptors in postmitotic neurons, which may in turn control animal locomotion. Involved in regulating GABA neurotransmitter release at neuromuscular junctions in GABA motor neurons. The chain is Anaphase-promoting complex subunit 1 from Caenorhabditis elegans.